The sequence spans 467 residues: AT-rich interactive domain-containing protein cfi-1 (467 aa).

Residues 1-56 (MSVRIDEPQLFVSMSKEPTQETVNVGGHHDDSSSNCDERVDDQTEEQKSPPASPDL) form a disordered region. A compositionally biased stretch (basic and acidic residues) spans 27–48 (GHHDDSSSNCDERVDDQTEEQK). An ARID domain is found at 181–273 (DVKRKEWLDD…YLYDYECEKE (93 aa)). The REKLES domain maps to 356-464 (AILEAHQRNL…GVLFALDETV (109 aa)). The interval 383-441 (LTACSNGNGGNIHNSGRESTSSNDSDIPAKRPKLENDVKTNGASSMRISTKHSDNSKTS) is disordered. Residues 409–420 (IPAKRPKLENDV) show a composition bias toward basic and acidic residues. A compositionally biased stretch (polar residues) spans 421–430 (KTNGASSMRI).

As to expression, present in IL2 and URA neurons, and in AVD and PVC interneurons. Present in muscles from head and pharynx (at protein level).

The protein resides in the nucleus. Functionally, transcription factor. Regulates neuronal subtype identity. Involved in motor neuron fate determination and maintenance, acting as a transcriptional repressor to counteract gene activation by transcription factor unc-3 in a subset of motor neurons. Probably acts by binding to specific promoter elements. Promotes differentiation of URA sensory neurons and prevents them from expressing male-specific CEM neuronal features. Promotes differentiation of AVD and PVC interneurons and their glutamate receptor expression. The protein is AT-rich interactive domain-containing protein cfi-1 (cfi-1) of Caenorhabditis elegans.